A 176-amino-acid chain; its full sequence is 3-hydroxydecanoyl-[acyl-carrier-protein] dehydratase (176 aa).

Residue H71 is part of the active site.

The protein belongs to the thioester dehydratase family. FabA subfamily. Homodimer.

The protein localises to the cytoplasm. It catalyses the reaction a (3R)-hydroxyacyl-[ACP] = a (2E)-enoyl-[ACP] + H2O. The enzyme catalyses (3R)-hydroxydecanoyl-[ACP] = (2E)-decenoyl-[ACP] + H2O. The catalysed reaction is (2E)-decenoyl-[ACP] = (3Z)-decenoyl-[ACP]. Its pathway is lipid metabolism; fatty acid biosynthesis. Its function is as follows. Necessary for the introduction of cis unsaturation into fatty acids. Catalyzes the dehydration of (3R)-3-hydroxydecanoyl-ACP to E-(2)-decenoyl-ACP and then its isomerization to Z-(3)-decenoyl-ACP. Can catalyze the dehydratase reaction for beta-hydroxyacyl-ACPs with saturated chain lengths up to 16:0, being most active on intermediate chain length. This Rhodopseudomonas palustris (strain BisB18) protein is 3-hydroxydecanoyl-[acyl-carrier-protein] dehydratase.